The chain runs to 122 residues: Large ribosomal subunit protein uL14 (122 aa).

This sequence belongs to the universal ribosomal protein uL14 family. Part of the 50S ribosomal subunit. Forms a cluster with proteins L3 and L19. In the 70S ribosome, L14 and L19 interact and together make contacts with the 16S rRNA in bridges B5 and B8.

In terms of biological role, binds to 23S rRNA. Forms part of two intersubunit bridges in the 70S ribosome. This Lactobacillus delbrueckii subsp. bulgaricus (strain ATCC 11842 / DSM 20081 / BCRC 10696 / JCM 1002 / NBRC 13953 / NCIMB 11778 / NCTC 12712 / WDCM 00102 / Lb 14) protein is Large ribosomal subunit protein uL14.